The sequence spans 262 residues: MAVGKNKRTSKGKKGGKKKVTDVFTKKEWYDLNAPKMFMVRKFGKTLVTKTIGKKLATDGLKGRIYEVNLADLNNDEDQAHKKIKLICDHIINRDCYTDFCGLSITRDKLCSLIRKGYTLIEGCTDVKTIDNYHLRMFCIAFTKKRPNQTKTTCYAQTSQIKKIRKKMVDIMHAEASKVLLKDLVKKIIPESIGKEVEKQCKKIFPLQNVLIRKVKILKRPKLDISKLMELHSDPKEDSGKNVKSLPESKEATNILTAELKH.

Residues 234 to 251 show a composition bias toward basic and acidic residues; that stretch reads DPKEDSGKNVKSLPESKE. The disordered stretch occupies residues 234 to 262; sequence DPKEDSGKNVKSLPESKEATNILTAELKH.

The protein belongs to the eukaryotic ribosomal protein eS1 family. Component of the small ribosomal subunit. Mature ribosomes consist of a small (40S) and a large (60S) subunit. The 40S subunit contains about 33 different proteins and 1 molecule of RNA (18S). The 60S subunit contains about 49 different proteins and 3 molecules of RNA (25S, 5.8S and 5S).

Its subcellular location is the cytoplasm. This is Small ribosomal subunit protein eS1 from Plasmodium yoelii yoelii.